A 164-amino-acid chain; its full sequence is Large ribosomal subunit protein uL15 (164 aa).

Residues 1–52 are disordered; the sequence is MSLSKLKAPKGANRERTRVGRGQGSGLGKTAGRGGKGQKARSGNMHFEGFEG. Residues 21–37 show a composition bias toward gly residues; sequence RGQGSGLGKTAGRGGKG.

Belongs to the universal ribosomal protein uL15 family. In terms of assembly, part of the 50S ribosomal subunit.

Binds to the 23S rRNA. The protein is Large ribosomal subunit protein uL15 of Anaeromyxobacter sp. (strain Fw109-5).